The primary structure comprises 431 residues: Dual-specificity RNA methyltransferase RlmN (431 aa).

The interval 1–26 (MATASLDTARPERRAGSDPFIEKTPE) is disordered. The segment covering 9-26 (ARPERRAGSDPFIEKTPE) has biased composition (basic and acidic residues). The active-site Proton acceptor is the Glu138. The 251-residue stretch at 144-394 (ANDRGTLCVS…VRTPRGRDIL (251 aa)) folds into the Radical SAM core domain. A disulfide bridge links Cys151 with Cys397. Residues Cys158, Cys162, and Cys165 each coordinate [4Fe-4S] cluster. S-adenosyl-L-methionine-binding positions include 223–224 (GE), Ser255, 277–279 (SLH), and Asn354. Cys397 acts as the S-methylcysteine intermediate in catalysis.

The protein belongs to the radical SAM superfamily. RlmN family. [4Fe-4S] cluster serves as cofactor.

It localises to the cytoplasm. The enzyme catalyses adenosine(2503) in 23S rRNA + 2 reduced [2Fe-2S]-[ferredoxin] + 2 S-adenosyl-L-methionine = 2-methyladenosine(2503) in 23S rRNA + 5'-deoxyadenosine + L-methionine + 2 oxidized [2Fe-2S]-[ferredoxin] + S-adenosyl-L-homocysteine. The catalysed reaction is adenosine(37) in tRNA + 2 reduced [2Fe-2S]-[ferredoxin] + 2 S-adenosyl-L-methionine = 2-methyladenosine(37) in tRNA + 5'-deoxyadenosine + L-methionine + 2 oxidized [2Fe-2S]-[ferredoxin] + S-adenosyl-L-homocysteine. Specifically methylates position 2 of adenine 2503 in 23S rRNA and position 2 of adenine 37 in tRNAs. m2A2503 modification seems to play a crucial role in the proofreading step occurring at the peptidyl transferase center and thus would serve to optimize ribosomal fidelity. The chain is Dual-specificity RNA methyltransferase RlmN from Methylobacterium sp. (strain 4-46).